Here is a 115-residue protein sequence, read N- to C-terminus: U3-lycotoxin-Ls1p (115 aa).

The N-terminal stretch at 1–20 (MKFVLLFGVLLVTLFSYSSA) is a signal peptide. The propeptide occupies 21–44 (EMFDDFDQADEDELLSLIEKEEAR). Cystine bridges form between Cys48/Cys63, Cys55/Cys72, Cys62/Cys87, and Cys74/Cys85.

Belongs to the neurotoxin 19 (CSTX) family. 01 subfamily. In terms of tissue distribution, expressed by the venom gland.

The protein resides in the secreted. The protein is U3-lycotoxin-Ls1p of Lycosa singoriensis (Wolf spider).